The primary structure comprises 450 residues: Perilipin-2 (450 aa).

Position 2 is an N-acetylalanine (Ala2). The residue at position 215 (Ser215) is a Phosphoserine. Phosphotyrosine is present on Tyr232. A disordered region spans residues 411–450 (ESESAQAPGTTRRPGRWSRKHPKPVPVSNAEGSQPDDSSS). Residues 423–433 (RPGRWSRKHPK) show a composition bias toward basic residues. The segment covering 440–450 (AEGSQPDDSSS) has biased composition (polar residues).

The protein belongs to the perilipin family. In terms of assembly, interacts with IRGC. Post-translationally, acylated; primarily with C14, C16 and C18 fatty acids. Phosphorylation at Tyr-232 by isoform 1 of CHKA (CHKalpha2) promotes dissociation from lipid droplets: dissociation is followed by recruitment of autophagosome machinery to lipid droplets and subsequent lipid droplet lipolysis. In terms of processing, polyubiquitination of Nt-acetylatable A-PLIN2 by MARCHF6 lead to degradation by 26S proteasomes. In terms of tissue distribution, milk lipid globules.

It is found in the membrane. It localises to the lipid droplet. Functionally, structural component of lipid droplets, which is required for the formation and maintenance of lipid storage droplets. The sequence is that of Perilipin-2 (PLIN2) from Bos taurus (Bovine).